A 291-amino-acid polypeptide reads, in one-letter code: ATP synthase gamma chain (291 aa).

The protein belongs to the ATPase gamma chain family. As to quaternary structure, F-type ATPases have 2 components, CF(1) - the catalytic core - and CF(0) - the membrane proton channel. CF(1) has five subunits: alpha(3), beta(3), gamma(1), delta(1), epsilon(1). CF(0) has three main subunits: a, b and c.

The protein resides in the cell inner membrane. Functionally, produces ATP from ADP in the presence of a proton gradient across the membrane. The gamma chain is believed to be important in regulating ATPase activity and the flow of protons through the CF(0) complex. The chain is ATP synthase gamma chain from Syntrophus aciditrophicus (strain SB).